A 72-amino-acid chain; its full sequence is QVFDQACKGVYDRAIFKKLDRVCDDCYNLYRKPYVAVSCRGNCYNNLVFRQCLEELFLGNGFNEYISGVQTV.

Gln1 is modified (pyrrolidone carboxylic acid). Phe3 carries the D-phenylalanine; in form CHHA-II modification. 3 cysteine pairs are disulfide-bonded: Cys7/Cys43, Cys23/Cys39, and Cys26/Cys52. Val72 is modified (valine amide).

In terms of processing, stereoinversion of L-Phe (in CHHA-I) to D-Phe (in CHHA-II).

It is found in the secreted. Hormone found in the sinus gland of isopods and decapods which controls the blood sugar level. Has a secretagogue action over the amylase released from the midgut gland. May act as a stress hormone and may be involved in the control of molting and reproduction. The polypeptide is Crustacean hyperglycemic hormone A (Cherax destructor (Common yabby crayfish)).